A 374-amino-acid polypeptide reads, in one-letter code: Cobalt-precorrin-5B C(1)-methyltransferase (374 aa).

The protein belongs to the CbiD family.

The enzyme catalyses Co-precorrin-5B + S-adenosyl-L-methionine = Co-precorrin-6A + S-adenosyl-L-homocysteine. It participates in cofactor biosynthesis; adenosylcobalamin biosynthesis; cob(II)yrinate a,c-diamide from sirohydrochlorin (anaerobic route): step 6/10. Its function is as follows. Catalyzes the methylation of C-1 in cobalt-precorrin-5B to form cobalt-precorrin-6A. In Synechococcus elongatus (strain ATCC 33912 / PCC 7942 / FACHB-805) (Anacystis nidulans R2), this protein is Cobalt-precorrin-5B C(1)-methyltransferase.